A 102-amino-acid polypeptide reads, in one-letter code: Small ribosomal subunit protein uS10 (102 aa).

This sequence belongs to the universal ribosomal protein uS10 family. Part of the 30S ribosomal subunit.

In terms of biological role, involved in the binding of tRNA to the ribosomes. This Bacillus cereus (strain ATCC 10987 / NRS 248) protein is Small ribosomal subunit protein uS10.